A 723-amino-acid polypeptide reads, in one-letter code: PX domain-containing protein EREL1 (723 aa).

Basic residues predominate over residues methionine 1–histidine 12. A disordered region spans residues methionine 1–proline 26. The 118-residue stretch at tyrosine 48 to arginine 165 folds into the PX domain. 2 disordered regions span residues glutamine 169 to proline 193 and tyrosine 209 to isoleucine 230. Residues aspartate 172–proline 193 are compositionally biased toward low complexity. Residues tyrosine 209–valine 225 show a composition bias toward polar residues. Coiled coils occupy residues asparagine 401 to lysine 474 and lysine 503 to glutamate 555. The interval aspartate 698–arginine 723 is disordered. Residues aspartate 704–aspartate 714 show a composition bias toward acidic residues.

It localises to the cytoplasm. The protein localises to the cytosol. The protein resides in the endosome membrane. Acts as an effector of RABF2A and RABF2B. Involved in vacuolar transport of storage proteins. Regulates membrane trafficking to protein storage vacuoles (PSVs). Binds specifically to phosphatidylinositol 3-monophosphate (PtdIns3P). The polypeptide is PX domain-containing protein EREL1 (Arabidopsis thaliana (Mouse-ear cress)).